A 263-amino-acid chain; its full sequence is Phosphatidylglycerol--prolipoprotein diacylglyceryl transferase (263 aa).

4 helical membrane passes run 10 to 30, 56 to 76, 91 to 111, and 117 to 137; these read VAIT…LFGF, MVTY…ILFY, IWNG…AMWL, and GLGF…GLFF. Arg-139 is a binding site for a 1,2-diacyl-sn-glycero-3-phospho-(1'-sn-glycerol). The next 3 helical transmembrane spans lie at 171–191, 199–219, and 231–251; these read PSQL…LWVF, GHVS…VEFV, and FGWL…GLWL.

It belongs to the Lgt family.

It is found in the cell inner membrane. It catalyses the reaction L-cysteinyl-[prolipoprotein] + a 1,2-diacyl-sn-glycero-3-phospho-(1'-sn-glycerol) = an S-1,2-diacyl-sn-glyceryl-L-cysteinyl-[prolipoprotein] + sn-glycerol 1-phosphate + H(+). Its pathway is protein modification; lipoprotein biosynthesis (diacylglyceryl transfer). In terms of biological role, catalyzes the transfer of the diacylglyceryl group from phosphatidylglycerol to the sulfhydryl group of the N-terminal cysteine of a prolipoprotein, the first step in the formation of mature lipoproteins. In Nitratidesulfovibrio vulgaris (strain DP4) (Desulfovibrio vulgaris), this protein is Phosphatidylglycerol--prolipoprotein diacylglyceryl transferase.